The sequence spans 442 residues: tRNA-2-methylthio-N(6)-dimethylallyladenosine synthase (442 aa).

The MTTase N-terminal domain occupies 5 to 122 (KKVFIKTLGC…LPEMIKRKQS (118 aa)). Cys14, Cys51, Cys85, Cys159, Cys163, and Cys166 together coordinate [4Fe-4S] cluster. A Radical SAM core domain is found at 145 to 378 (KAEGAKAYVS…DLLNSNAQII (234 aa)). Positions 380 to 442 (RQMVGTEQRI…LPNSLRGELI (63 aa)) constitute a TRAM domain.

The protein belongs to the methylthiotransferase family. MiaB subfamily. In terms of assembly, monomer. Requires [4Fe-4S] cluster as cofactor.

The protein localises to the cytoplasm. The catalysed reaction is N(6)-dimethylallyladenosine(37) in tRNA + (sulfur carrier)-SH + AH2 + 2 S-adenosyl-L-methionine = 2-methylsulfanyl-N(6)-dimethylallyladenosine(37) in tRNA + (sulfur carrier)-H + 5'-deoxyadenosine + L-methionine + A + S-adenosyl-L-homocysteine + 2 H(+). In terms of biological role, catalyzes the methylthiolation of N6-(dimethylallyl)adenosine (i(6)A), leading to the formation of 2-methylthio-N6-(dimethylallyl)adenosine (ms(2)i(6)A) at position 37 in tRNAs that read codons beginning with uridine. This Francisella philomiragia subsp. philomiragia (strain ATCC 25017 / CCUG 19701 / FSC 153 / O#319-036) protein is tRNA-2-methylthio-N(6)-dimethylallyladenosine synthase.